We begin with the raw amino-acid sequence, 245 residues long: Uridylate kinase (245 aa).

Position 18–21 (Lys18–Gly21) interacts with ATP. Residue Gly60 coordinates UMP. ATP-binding residues include Gly61 and Arg65. UMP-binding positions include Asp80 and Thr141–Thr148. ATP is bound by residues Thr168, Tyr174, and Asp177.

This sequence belongs to the UMP kinase family. In terms of assembly, homohexamer.

The protein resides in the cytoplasm. It carries out the reaction UMP + ATP = UDP + ADP. It functions in the pathway pyrimidine metabolism; CTP biosynthesis via de novo pathway; UDP from UMP (UMPK route): step 1/1. Its activity is regulated as follows. Inhibited by UTP. Functionally, catalyzes the reversible phosphorylation of UMP to UDP. The protein is Uridylate kinase of Pseudomonas aeruginosa (strain UCBPP-PA14).